A 2763-amino-acid polypeptide reads, in one-letter code: Large tegument protein deneddylase (2763 aa).

The tract at residues Met1 to Tyr247 is deubiquitination activity. Positions Ala12–Ser237 constitute a Peptidase C76 domain. Catalysis depends on residues Cys32, Asp168, and His170. The interval Leu495–Ser523 is interaction with inner tegument protein. 8 repeat units span residues Pro2455–Gln2457, Pro2458–Gln2460, Pro2461–Gln2463, Pro2464–Gln2466, Pro2467–Gln2469, Pro2470–Gln2472, Pro2473–Gln2475, and Pro2476–Gln2478. An 8 X 3 AA repeats of P-A/V-Q region spans residues Pro2455 to Gln2478. The disordered stretch occupies residues Asn2630–Ser2651.

Belongs to the herpesviridae large tegument protein family. As to quaternary structure, interacts with host CUL1 and CUL4A; these interactions inhibit the E3 ligase activity of cullins. Interacts with inner tegument protein. Interacts with capsid vertex specific component CVC2. Interacts with the major capsid protein/MCP.

It is found in the virion tegument. It localises to the host cytoplasm. The protein resides in the host nucleus. It catalyses the reaction Thiol-dependent hydrolysis of ester, thioester, amide, peptide and isopeptide bonds formed by the C-terminal Gly of ubiquitin (a 76-residue protein attached to proteins as an intracellular targeting signal).. Large tegument protein that plays multiple roles in the viral cycle. During viral entry, remains associated with the capsid while most of the tegument is detached and participates in the capsid transport toward the host nucleus. Plays a role in the routing of the capsid at the nuclear pore complex and subsequent uncoating. Within the host nucleus, acts as a deneddylase and promotes the degradation of nuclear CRLs (cullin-RING ubiquitin ligases) and thereby stabilizes nuclear CRL substrates, while cytoplasmic CRLs remain unaffected. These modifications prevent host cell cycle S-phase progression and create a favorable environment allowing efficient viral genome replication. Participates later in the secondary envelopment of capsids. Indeed, plays a linker role for the association of the outer viral tegument to the capsids together with the inner tegument protein. In Varicella-zoster virus (strain Oka vaccine) (HHV-3), this protein is Large tegument protein deneddylase.